A 679-amino-acid chain; its full sequence is Methionine--tRNA ligase (679 aa).

Residues 15 to 25 (PYANGSIHLGH) carry the 'HIGH' region motif. Zn(2+)-binding residues include Cys-146, Cys-149, Cys-159, and Cys-162. A 'KMSKS' region motif is present at residues 332–336 (KMSKS). Lys-335 is a binding site for ATP. A tRNA-binding domain is found at 577 to 679 (DFAKVDMRVA…AGALPGMPVK (103 aa)).

The protein belongs to the class-I aminoacyl-tRNA synthetase family. MetG type 1 subfamily. In terms of assembly, homodimer. The cofactor is Zn(2+).

Its subcellular location is the cytoplasm. The catalysed reaction is tRNA(Met) + L-methionine + ATP = L-methionyl-tRNA(Met) + AMP + diphosphate. Is required not only for elongation of protein synthesis but also for the initiation of all mRNA translation through initiator tRNA(fMet) aminoacylation. This chain is Methionine--tRNA ligase, found in Sodalis glossinidius (strain morsitans).